We begin with the raw amino-acid sequence, 108 residues long: L-rhamnose mutarotase (108 aa).

Residue Tyr18 coordinates substrate. His22 functions as the Proton donor in the catalytic mechanism. Substrate-binding positions include Tyr41 and 76–77 (WW).

The protein belongs to the rhamnose mutarotase family. Homodimer.

It localises to the cytoplasm. It catalyses the reaction alpha-L-rhamnose = beta-L-rhamnose. It functions in the pathway carbohydrate metabolism; L-rhamnose metabolism. In terms of biological role, involved in the anomeric conversion of L-rhamnose. The protein is L-rhamnose mutarotase of Paraburkholderia phymatum (strain DSM 17167 / CIP 108236 / LMG 21445 / STM815) (Burkholderia phymatum).